Reading from the N-terminus, the 886-residue chain is Phosphatidylinositol 3-kinase catalytic subunit type 3 (886 aa).

In terms of domain architecture, C2 PI3K-type spans Tyr35 to Gln184. The PIK helical domain maps to Asp283–Val519. Residues Gly414–Gly464 form a disordered region. The span at Ser429 to Ile444 shows a compositional bias: polar residues. A compositionally biased stretch (low complexity) spans Leu445 to Ser454. Residues Ile604 to Phe870 form the PI3K/PI4K catalytic domain. The interval Leu610 to Met616 is G-loop. The segment at Gly739–Asn747 is catalytic loop. The segment at His758–Asn779 is activation loop.

It belongs to the PI3/PI4-kinase family. Component of the PI3K (PI3KC3/PI3K-III/class III phosphatidylinositol 3-kinase) complex the core of which is composed of the catalytic subunit pik3c3, the regulatory subunit pik3r4 and becn1 associating with additional regulatory/auxiliary subunits to form alternative complex forms. Mn(2+) is required as a cofactor.

It localises to the midbody. The enzyme catalyses a 1,2-diacyl-sn-glycero-3-phospho-(1D-myo-inositol) + ATP = a 1,2-diacyl-sn-glycero-3-phospho-(1D-myo-inositol-3-phosphate) + ADP + H(+). In terms of biological role, catalytic subunit of the PI3K complex that mediates formation of phosphatidylinositol 3-phosphate; different complex forms are believed to play a role in multiple membrane trafficking pathways. Involved in the transport of lysosomal enzyme precursors to lysosomes. Required for transport from early to late endosomes. The polypeptide is Phosphatidylinositol 3-kinase catalytic subunit type 3 (pik3c3) (Xenopus laevis (African clawed frog)).